A 295-amino-acid polypeptide reads, in one-letter code: Ribosomal RNA small subunit methyltransferase H (295 aa).

Residues 36–38 (GGH), aspartate 56, leucine 90, aspartate 104, and histidine 111 each bind S-adenosyl-L-methionine.

It belongs to the methyltransferase superfamily. RsmH family.

The protein localises to the cytoplasm. It carries out the reaction cytidine(1402) in 16S rRNA + S-adenosyl-L-methionine = N(4)-methylcytidine(1402) in 16S rRNA + S-adenosyl-L-homocysteine + H(+). In terms of biological role, specifically methylates the N4 position of cytidine in position 1402 (C1402) of 16S rRNA. This Dictyoglomus turgidum (strain DSM 6724 / Z-1310) protein is Ribosomal RNA small subunit methyltransferase H.